We begin with the raw amino-acid sequence, 341 residues long: S-adenosylmethionine:tRNA ribosyltransferase-isomerase (341 aa).

The protein belongs to the QueA family. As to quaternary structure, monomer.

It localises to the cytoplasm. It carries out the reaction 7-aminomethyl-7-carbaguanosine(34) in tRNA + S-adenosyl-L-methionine = epoxyqueuosine(34) in tRNA + adenine + L-methionine + 2 H(+). Its pathway is tRNA modification; tRNA-queuosine biosynthesis. Functionally, transfers and isomerizes the ribose moiety from AdoMet to the 7-aminomethyl group of 7-deazaguanine (preQ1-tRNA) to give epoxyqueuosine (oQ-tRNA). The sequence is that of S-adenosylmethionine:tRNA ribosyltransferase-isomerase from Staphylococcus haemolyticus (strain JCSC1435).